The primary structure comprises 232 residues: EEF1A lysine methyltransferase 3 (232 aa).

Residues tryptophan 57, 83 to 85 (GAG), aspartate 104, tryptophan 133, and alanine 150 contribute to the S-adenosyl-L-methionine site.

It belongs to the methyltransferase superfamily. METTL21 family. Interacts with members of the heat shock protein 70 and 90 families and of the TCP-1 chaperonin family, as well as with HSPD1, STIP1 and tubulin; at least some of these proteins may be methylation substrates.

It is found in the cytoplasm. It localises to the cytoskeleton. Its subcellular location is the microtubule organizing center. The protein resides in the centrosome. It carries out the reaction L-lysyl-[protein] + 3 S-adenosyl-L-methionine = N(6),N(6),N(6)-trimethyl-L-lysyl-[protein] + 3 S-adenosyl-L-homocysteine + 3 H(+). The catalysed reaction is L-lysyl-[protein] + S-adenosyl-L-methionine = N(6)-methyl-L-lysyl-[protein] + S-adenosyl-L-homocysteine + H(+). It catalyses the reaction N(6)-methyl-L-lysyl-[protein] + S-adenosyl-L-methionine = N(6),N(6)-dimethyl-L-lysyl-[protein] + S-adenosyl-L-homocysteine + H(+). The enzyme catalyses N(6),N(6)-dimethyl-L-lysyl-[protein] + S-adenosyl-L-methionine = N(6),N(6),N(6)-trimethyl-L-lysyl-[protein] + S-adenosyl-L-homocysteine + H(+). Its function is as follows. Protein-lysine methyltransferase that selectively mono-, di- and trimethylates 'Lys-165' of the translation elongation factors EEF1A1 and EEF1A2 in an aminoacyl-tRNA and GTP-dependent manner. EEF1A1 methylation by EEF1AKMT3 is dynamic as well as inducible by stress conditions, such as ER-stress, and plays a regulatory role on mRNA translation. This Mus musculus (Mouse) protein is EEF1A lysine methyltransferase 3.